The following is a 167-amino-acid chain: Urease accessory protein UreE (167 aa).

The disordered stretch occupies residues 137–167 (ARGAYHAHGGHSHGHDHGHSHGHDHHDHSHD). The segment covering 149–167 (HGHDHGHSHGHDHHDHSHD) has biased composition (basic and acidic residues).

This sequence belongs to the UreE family.

Its subcellular location is the cytoplasm. Involved in urease metallocenter assembly. Binds nickel. Probably functions as a nickel donor during metallocenter assembly. This Rhizobium rhizogenes (strain K84 / ATCC BAA-868) (Agrobacterium radiobacter) protein is Urease accessory protein UreE.